The sequence spans 248 residues: 3-deoxy-manno-octulosonate cytidylyltransferase (248 aa).

This sequence belongs to the KdsB family.

It localises to the cytoplasm. The enzyme catalyses 3-deoxy-alpha-D-manno-oct-2-ulosonate + CTP = CMP-3-deoxy-beta-D-manno-octulosonate + diphosphate. It functions in the pathway nucleotide-sugar biosynthesis; CMP-3-deoxy-D-manno-octulosonate biosynthesis; CMP-3-deoxy-D-manno-octulosonate from 3-deoxy-D-manno-octulosonate and CTP: step 1/1. It participates in bacterial outer membrane biogenesis; lipopolysaccharide biosynthesis. Its function is as follows. Activates KDO (a required 8-carbon sugar) for incorporation into bacterial lipopolysaccharide in Gram-negative bacteria. This is 3-deoxy-manno-octulosonate cytidylyltransferase from Cronobacter sakazakii (strain ATCC BAA-894) (Enterobacter sakazakii).